Consider the following 385-residue polypeptide: Bifunctional chorismate mutase/prephenate dehydratase (385 aa).

In terms of domain architecture, Chorismate mutase spans 1–92 (MPSKNDLLSF…ESVLTQKKLL (92 aa)). 7 residues coordinate substrate: arginine 11, arginine 28, lysine 39, aspartate 48, glutamate 52, serine 84, and glutamine 88. Residues 105 to 285 (SFSFLGPKGS…NITRFILLSR (181 aa)) enclose the Prephenate dehydratase domain. Positions 286–385 (KPVSISSKIP…PSENITPIIP (100 aa)) are regulatory. An ACT domain is found at 299–376 (TLIFNTGQES…KFIKILGCYP (78 aa)).

The protein resides in the cytoplasm. The enzyme catalyses chorismate = prephenate. It catalyses the reaction prephenate + H(+) = 3-phenylpyruvate + CO2 + H2O. Its pathway is amino-acid biosynthesis; L-phenylalanine biosynthesis; phenylpyruvate from prephenate: step 1/1. The protein operates within metabolic intermediate biosynthesis; prephenate biosynthesis; prephenate from chorismate: step 1/1. In terms of biological role, catalyzes the Claisen rearrangement of chorismate to prephenate and the decarboxylation/dehydration of prephenate to phenylpyruvate. The protein is Bifunctional chorismate mutase/prephenate dehydratase (pheA) of Buchnera aphidicola subsp. Schizaphis graminum (strain Sg).